Consider the following 309-residue polypeptide: MRPKISIIGAGFVGSTAAHWIASKELGDVVLVDIIDGVPQGKGLDLLQAGPIEGFDVKITGTNDYAATANSDIIIVTSGAPRKPGMSREDLIRVNADITRDCISKAAPLSPDAVIIMVNNPLDTMTYLAKQVSGFPKNRVVGQAGVLDTARYRTFIAMEAGVSVEDIQAMLMGGHGDEMVPLPRFTTISGIPVTEFISKERLDAIIERTRKGGGEIVNLLKTGSAYYAPSAATVQMVEAILRDKKRVLPCACYLEGEYGLNDIYFGVPCVLGAGGVERVLELPLNDEEMALVRKSAEAVSSSIATLKQM.

Residues 9–14 (GAGFVG) and D33 each bind NAD(+). R82 and R88 together coordinate substrate. NAD(+) is bound by residues N95 and 118 to 120 (VNN). The substrate site is built by N120 and R151. H175 (proton acceptor) is an active-site residue.

The protein belongs to the LDH/MDH superfamily. MDH type 3 family.

The catalysed reaction is (S)-malate + NAD(+) = oxaloacetate + NADH + H(+). Catalyzes the reversible oxidation of malate to oxaloacetate. The sequence is that of Malate dehydrogenase from Roseiflexus castenholzii (strain DSM 13941 / HLO8).